The following is a 173-amino-acid chain: Crossover junction endodeoxyribonuclease RuvC (173 aa).

Catalysis depends on residues Asp-8, Glu-67, and Asp-139. 3 residues coordinate Mg(2+): Asp-8, Glu-67, and Asp-139.

This sequence belongs to the RuvC family. Homodimer which binds Holliday junction (HJ) DNA. The HJ becomes 2-fold symmetrical on binding to RuvC with unstacked arms; it has a different conformation from HJ DNA in complex with RuvA. In the full resolvosome a probable DNA-RuvA(4)-RuvB(12)-RuvC(2) complex forms which resolves the HJ. Mg(2+) serves as cofactor.

It localises to the cytoplasm. It catalyses the reaction Endonucleolytic cleavage at a junction such as a reciprocal single-stranded crossover between two homologous DNA duplexes (Holliday junction).. Functionally, the RuvA-RuvB-RuvC complex processes Holliday junction (HJ) DNA during genetic recombination and DNA repair. Endonuclease that resolves HJ intermediates. Cleaves cruciform DNA by making single-stranded nicks across the HJ at symmetrical positions within the homologous arms, yielding a 5'-phosphate and a 3'-hydroxyl group; requires a central core of homology in the junction. The consensus cleavage sequence is 5'-(A/T)TT(C/G)-3'. Cleavage occurs on the 3'-side of the TT dinucleotide at the point of strand exchange. HJ branch migration catalyzed by RuvA-RuvB allows RuvC to scan DNA until it finds its consensus sequence, where it cleaves and resolves the cruciform DNA. The polypeptide is Crossover junction endodeoxyribonuclease RuvC (Aliivibrio fischeri (strain ATCC 700601 / ES114) (Vibrio fischeri)).